Consider the following 115-residue polypeptide: Large ribosomal subunit protein bL20 (115 aa).

The protein belongs to the bacterial ribosomal protein bL20 family.

Binds directly to 23S ribosomal RNA and is necessary for the in vitro assembly process of the 50S ribosomal subunit. It is not involved in the protein synthesizing functions of that subunit. The chain is Large ribosomal subunit protein bL20 from Prochlorococcus marinus (strain MIT 9515).